We begin with the raw amino-acid sequence, 460 residues long: Bifunctional protein GlmU (460 aa).

The tract at residues 1–229 is pyrophosphorylase; sequence MTNYAIILAA…FNESLGVNDR (229 aa). UDP-N-acetyl-alpha-D-glucosamine is bound by residues 8–11, lysine 22, glutamine 72, and 77–78; these read LAAG and GT. Aspartate 102 contacts Mg(2+). The UDP-N-acetyl-alpha-D-glucosamine site is built by glycine 139, glutamate 154, asparagine 169, and asparagine 227. Asparagine 227 serves as a coordination point for Mg(2+). The tract at residues 230 to 250 is linker; sequence VALATAETVMRQRITQKHMVN. The N-acetyltransferase stretch occupies residues 251–460; sequence GVTFQNPETV…RLAHHPSRSK (210 aa). The UDP-N-acetyl-alpha-D-glucosamine site is built by arginine 332 and lysine 350. Histidine 362 serves as the catalytic Proton acceptor. Tyrosine 365 and asparagine 376 together coordinate UDP-N-acetyl-alpha-D-glucosamine. Residues alanine 379, 385–386, serine 404, alanine 422, and arginine 439 each bind acetyl-CoA; that span reads NY.

The protein in the N-terminal section; belongs to the N-acetylglucosamine-1-phosphate uridyltransferase family. In the C-terminal section; belongs to the transferase hexapeptide repeat family. In terms of assembly, homotrimer. Requires Mg(2+) as cofactor.

It localises to the cytoplasm. It catalyses the reaction alpha-D-glucosamine 1-phosphate + acetyl-CoA = N-acetyl-alpha-D-glucosamine 1-phosphate + CoA + H(+). The catalysed reaction is N-acetyl-alpha-D-glucosamine 1-phosphate + UTP + H(+) = UDP-N-acetyl-alpha-D-glucosamine + diphosphate. It participates in nucleotide-sugar biosynthesis; UDP-N-acetyl-alpha-D-glucosamine biosynthesis; N-acetyl-alpha-D-glucosamine 1-phosphate from alpha-D-glucosamine 6-phosphate (route II): step 2/2. The protein operates within nucleotide-sugar biosynthesis; UDP-N-acetyl-alpha-D-glucosamine biosynthesis; UDP-N-acetyl-alpha-D-glucosamine from N-acetyl-alpha-D-glucosamine 1-phosphate: step 1/1. It functions in the pathway bacterial outer membrane biogenesis; LPS lipid A biosynthesis. Functionally, catalyzes the last two sequential reactions in the de novo biosynthetic pathway for UDP-N-acetylglucosamine (UDP-GlcNAc). The C-terminal domain catalyzes the transfer of acetyl group from acetyl coenzyme A to glucosamine-1-phosphate (GlcN-1-P) to produce N-acetylglucosamine-1-phosphate (GlcNAc-1-P), which is converted into UDP-GlcNAc by the transfer of uridine 5-monophosphate (from uridine 5-triphosphate), a reaction catalyzed by the N-terminal domain. This is Bifunctional protein GlmU from Streptococcus pyogenes serotype M6 (strain ATCC BAA-946 / MGAS10394).